The sequence spans 347 residues: Phenylalanine--tRNA ligase alpha subunit (347 aa).

Glutamate 262 is a Mg(2+) binding site.

The protein belongs to the class-II aminoacyl-tRNA synthetase family. Phe-tRNA synthetase alpha subunit type 1 subfamily. In terms of assembly, tetramer of two alpha and two beta subunits. It depends on Mg(2+) as a cofactor.

Its subcellular location is the cytoplasm. The enzyme catalyses tRNA(Phe) + L-phenylalanine + ATP = L-phenylalanyl-tRNA(Phe) + AMP + diphosphate + H(+). The polypeptide is Phenylalanine--tRNA ligase alpha subunit (Roseiflexus sp. (strain RS-1)).